Reading from the N-terminus, the 287-residue chain is Elongation factor Ts (287 aa).

The tract at residues 77 to 80 (TDFV) is involved in Mg(2+) ion dislocation from EF-Tu.

It belongs to the EF-Ts family.

It is found in the cytoplasm. Its function is as follows. Associates with the EF-Tu.GDP complex and induces the exchange of GDP to GTP. It remains bound to the aminoacyl-tRNA.EF-Tu.GTP complex up to the GTP hydrolysis stage on the ribosome. This chain is Elongation factor Ts, found in Wolbachia sp. subsp. Brugia malayi (strain TRS).